The following is a 517-amino-acid chain: NADH-quinone oxidoreductase subunit N (517 aa).

A run of 14 helical transmembrane segments spans residues 14–34 (LAPTLILLGAALVGVLVEAFV), 40–60 (HMVQLTVAMLAVLSALTMVVV), 77–97 (GPALFLQGAILVLAAMALLLI), 131–151 (ATEVYPLTSFAVGGMLIFVAA), 154–174 (LLTMFIALEVLSLPLYLLCAL), 189–209 (YFLLGAYASAFFLFGVALVYG), 238–258 (VLLFGGMALIAIGLLFKAAAA), 272–292 (PTPITGFMAACTKVAAFGALL), 306–326 (FTPILGVVAVLTMLVGAVLAV), 334–354 (LLAYSSIANAGYLLVGVLAPS), 362–382 (MFYLVAYGFSVLAAFAVVTLV), 404–424 (FYAGLFTFILLAFAGIPLTSG), 451–471 (SMVLAFPYLRVVVLMWLSEPG), and 481–501 (GWLTSAALTIGVVATLVLGVV).

The protein belongs to the complex I subunit 2 family. In terms of assembly, NDH-1 is composed of 14 different subunits. Subunits NuoA, H, J, K, L, M, N constitute the membrane sector of the complex.

The protein localises to the cell membrane. It carries out the reaction a quinone + NADH + 5 H(+)(in) = a quinol + NAD(+) + 4 H(+)(out). Functionally, NDH-1 shuttles electrons from NADH, via FMN and iron-sulfur (Fe-S) centers, to quinones in the respiratory chain. The immediate electron acceptor for the enzyme in this species is believed to be a menaquinone. Couples the redox reaction to proton translocation (for every two electrons transferred, four hydrogen ions are translocated across the cytoplasmic membrane), and thus conserves the redox energy in a proton gradient. This chain is NADH-quinone oxidoreductase subunit N, found in Salinispora arenicola (strain CNS-205).